Reading from the N-terminus, the 417-residue chain is uncharacterized protein (417 aa).

The signal sequence occupies residues 1-21 (MPYYWGAILIGGVFLAGCTQN).

This is an uncharacterized protein from Methanocaldococcus jannaschii (strain ATCC 43067 / DSM 2661 / JAL-1 / JCM 10045 / NBRC 100440) (Methanococcus jannaschii).